Reading from the N-terminus, the 187-residue chain is Large ribosomal subunit protein bL32m (187 aa).

The Zn(2+) site is built by C109, C112, C122, and C125.

The protein belongs to the bacterial ribosomal protein bL32 family. As to quaternary structure, component of the mitochondrial ribosome large subunit (39S) which comprises a 16S rRNA and about 50 distinct proteins. MRPL32 precursor is processed by the m-AAA protease (composed of AFG3L2 and SPG7), which cleaves the N-terminal transit peptide. Cleavage by the m-AAA protease takes place prior to assembly into the large subunit, an essential step for mitochondrial ribosome (mitoribosome) assembly. Proper processing by the m-AAA protease is dependent on the zinc-binding region within the tightly folded C-terminal domain of MRPL32: zinc-dependent folding halts degradation initiated from the N-terminus and triggers the release of mature MRPL32.

It localises to the mitochondrion. Component of the mitochondrial large ribosomal subunit (mt-LSU). The mitochondrial ribosome (mitoribosome) is a large ribonucleoprotein complex responsible for the synthesis of proteins inside mitochondria. The polypeptide is Large ribosomal subunit protein bL32m (Mrpl32) (Mus musculus (Mouse)).